The following is a 223-amino-acid chain: Voltage-dependent calcium channel gamma-1 subunit (223 aa).

Residues 1–10 (MSQTKTLKVR) are Cytoplasmic-facing. Residues 11 to 29 (VALLCILVGIVLALVAVVT) form a helical membrane-spanning segment. Over 30-109 (DHWAVLSPHV…TQKEYSISAA (80 aa)) the chain is Extracellular. Residues N43 and N80 are each glycosylated (N-linked (GlcNAc...) asparagine). A disulfide bond links C57 and C81. Residues 110–130 (AIAIFSLGFIIVGTLCALLSF) form a helical membrane-spanning segment. Residues 131–135 (RKKRD) lie on the Cytoplasmic side of the membrane. A helical membrane pass occupies residues 136–156 (YLLRPASMFYIFAGLCLSVSA). The Extracellular portion of the chain corresponds to 157-180 (EVMRQSVQRMVDSEHTAWIAHSLA). The helical transmembrane segment at 181-205 (WSFICACVAAALLLVGGLALLLLAL) threads the bilayer. Topologically, residues 206–223 (PRMPRDPWESCMDAEPEH) are cytoplasmic.

The protein belongs to the PMP-22/EMP/MP20 family. CACNG subfamily. In terms of assembly, component of a calcium channel complex consisting of a pore-forming alpha subunit (CACNA1S) and the ancillary subunits CACNB1 or CACNB2, CACNG1 and CACNA2D1. The channel complex contains alpha, beta, gamma and delta subunits in a 1:1:1:1 ratio, i.e. it contains either CACNB1 or CACNB2. N-glycosylated.

It localises to the cell membrane. It is found in the sarcolemma. Functionally, regulatory subunit of the voltage-gated calcium channel that gives rise to L-type calcium currents in skeletal muscle. Regulates channel inactivation kinetics. This Bos taurus (Bovine) protein is Voltage-dependent calcium channel gamma-1 subunit (CACNG1).